The following is a 493-amino-acid chain: Ribosomal protein uS12 methylthiotransferase RimO (493 aa).

The 117-residue stretch at 5–121 (RTVALVTLGC…ISDRLQTILN (117 aa)) folds into the MTTase N-terminal domain. [4Fe-4S] cluster-binding residues include Cys14, Cys50, Cys84, Cys198, Cys202, and Cys205. Positions 184–415 (LGTSPVASVK…QLAEELTSQR (232 aa)) constitute a Radical SAM core domain. The TRAM domain maps to 417-487 (EERVGETLQV…GVDLVAEHHE (71 aa)).

Belongs to the methylthiotransferase family. RimO subfamily. [4Fe-4S] cluster is required as a cofactor.

Its subcellular location is the cytoplasm. It catalyses the reaction L-aspartate(89)-[ribosomal protein uS12]-hydrogen + (sulfur carrier)-SH + AH2 + 2 S-adenosyl-L-methionine = 3-methylsulfanyl-L-aspartate(89)-[ribosomal protein uS12]-hydrogen + (sulfur carrier)-H + 5'-deoxyadenosine + L-methionine + A + S-adenosyl-L-homocysteine + 2 H(+). Its function is as follows. Catalyzes the methylthiolation of an aspartic acid residue of ribosomal protein uS12. This Streptomyces griseus subsp. griseus (strain JCM 4626 / CBS 651.72 / NBRC 13350 / KCC S-0626 / ISP 5235) protein is Ribosomal protein uS12 methylthiotransferase RimO.